The primary structure comprises 516 residues: Endoglucanase 20 (516 aa).

Residues 1-23 (MAAGMVATMVLLTCLAAGGLVVG) form the signal peptide. Asn-83 carries N-linked (GlcNAc...) asparagine glycosylation. The Nucleophile role is filled by Asp-93. Active-site residues include His-416, Asp-468, and Glu-477.

This sequence belongs to the glycosyl hydrolase 9 (cellulase E) family.

It localises to the secreted. The catalysed reaction is Endohydrolysis of (1-&gt;4)-beta-D-glucosidic linkages in cellulose, lichenin and cereal beta-D-glucans.. The protein is Endoglucanase 20 (GLU15) of Oryza sativa subsp. japonica (Rice).